Here is a 681-residue protein sequence, read N- to C-terminus: DNA-directed RNA polymerase subunit beta' (681 aa).

Residues cysteine 69, cysteine 71, cysteine 87, and cysteine 90 each coordinate Zn(2+). Mg(2+) contacts are provided by aspartate 489, aspartate 491, and aspartate 493.

This sequence belongs to the RNA polymerase beta' chain family. RpoC1 subfamily. In terms of assembly, in plastids the minimal PEP RNA polymerase catalytic core is composed of four subunits: alpha, beta, beta', and beta''. When a (nuclear-encoded) sigma factor is associated with the core the holoenzyme is formed, which can initiate transcription. Mg(2+) is required as a cofactor. Requires Zn(2+) as cofactor.

Its subcellular location is the plastid. The protein resides in the chloroplast. It carries out the reaction RNA(n) + a ribonucleoside 5'-triphosphate = RNA(n+1) + diphosphate. DNA-dependent RNA polymerase catalyzes the transcription of DNA into RNA using the four ribonucleoside triphosphates as substrates. This chain is DNA-directed RNA polymerase subunit beta', found in Anthoceros angustus (Hornwort).